The primary structure comprises 88 residues: Large ribosomal subunit protein bL31B (88 aa).

This sequence belongs to the bacterial ribosomal protein bL31 family. Type B subfamily. In terms of assembly, part of the 50S ribosomal subunit.

This is Large ribosomal subunit protein bL31B from Leuconostoc citreum (strain KM20).